Here is a 229-residue protein sequence, read N- to C-terminus: Heptaprenylglyceryl phosphate synthase (229 aa).

Lys12 is a sn-glycerol 1-phosphate binding site. Residues Asp14 and Ser40 each coordinate Mg(2+). Residues 159-164 (YLEYSG), Gly189, and 209-210 (GN) each bind sn-glycerol 1-phosphate.

Belongs to the GGGP/HepGP synthase family. Group I subfamily. Homodimer. The cofactor is Mg(2+).

The enzyme catalyses sn-glycerol 1-phosphate + all-trans-heptaprenyl diphosphate = 3-heptaprenyl-sn-glycero-1-phosphate + diphosphate. It participates in membrane lipid metabolism; glycerophospholipid metabolism. Its function is as follows. Prenyltransferase that catalyzes in vivo the transfer of the heptaprenyl moiety of heptaprenyl pyrophosphate (HepPP; 35 carbon atoms) to the C3 hydroxyl of sn-glycerol-1-phosphate (G1P), producing heptaprenylglyceryl phosphate (HepGP). This reaction is an ether-bond-formation step in the biosynthesis of archaea-type G1P-based membrane lipids found in Bacillales. This chain is Heptaprenylglyceryl phosphate synthase, found in Bacillus velezensis (strain DSM 23117 / BGSC 10A6 / LMG 26770 / FZB42) (Bacillus amyloliquefaciens subsp. plantarum).